Reading from the N-terminus, the 150-residue chain is Placenta-specific protein 4 (150 aa).

In terms of tissue distribution, expressed in placental syncytiotrophoblast and choriocarcinoma cells.

The protein is Placenta-specific protein 4 (PLAC4) of Homo sapiens (Human).